The chain runs to 213 residues: MAANKSYKSYFLDPLWGNNQPLIAILGICSALAVTTTVNTAITMGLAVSFVTGCSSFFVSLLRKATPDSVRMITQLIIISLFVIVIDQFLKAFFFTISKTLSVFVGLIITNCIVMGRAESLARNVPPIPAFLDGLASGLGYGWVLVTVSIVREFFGFGTILGLQLIPKCFYASETHPDGYENFGLMVLAPSAFFLLGIMIWGVNILRSKKAKR.

Transmembrane regions (helical) follow at residues 21-41, 42-62, 69-86, 101-121, 131-151, and 183-203; these read PLIAILGICSALAVTTTVNTA, ITMGLAVSFVTGCSSFFVSLL, SVRMITQLIIISLFVIVI, LSVFVGLIITNCIVMGRAESL, FLDGLASGLGYGWVLVTVSIV, and FGLMVLAPSAFFLLGIMIWGV.

This sequence belongs to the NqrDE/RnfAE family. As to quaternary structure, composed of six subunits; NqrA, NqrB, NqrC, NqrD, NqrE and NqrF.

It localises to the cell inner membrane. It carries out the reaction a ubiquinone + n Na(+)(in) + NADH + H(+) = a ubiquinol + n Na(+)(out) + NAD(+). Functionally, NQR complex catalyzes the reduction of ubiquinone-1 to ubiquinol by two successive reactions, coupled with the transport of Na(+) ions from the cytoplasm to the periplasm. NqrA to NqrE are probably involved in the second step, the conversion of ubisemiquinone to ubiquinol. The protein is Na(+)-translocating NADH-quinone reductase subunit D of Chlamydia caviae (strain ATCC VR-813 / DSM 19441 / 03DC25 / GPIC) (Chlamydophila caviae).